Reading from the N-terminus, the 1311-residue chain is Cyclin-G-associated kinase (1311 aa).

Residue Ser2 is modified to N-acetylserine. Phosphoserine is present on residues Ser2 and Ser16. The Protein kinase domain occupies 40–314 (LRVRRVLAEG…SIAEVVHQLQ (275 aa)). Asp173 (proton acceptor) is an active-site residue. A Phosphatase tensin-type domain is found at 399-566 (SVANYAKGDL…EYMCDMVAEE (168 aa)). Phosphoserine is present on Ser456. A C2 tensin-type domain is found at 572–710 (SKPILVRAVV…FQVNLEVEVE (139 aa)). 2 disordered regions span residues 709 to 729 (VEPRDRPSREAPPWENSSMRG) and 749 to 788 (FGKPELPRQPGSTAQYDAGAGSPEAEPTDSDSPPSSSADA). At Ser770 the chain carries Phosphoserine. Positions 770–788 (SPEAEPTDSDSPPSSSADA) are enriched in low complexity. Thr776 carries the post-translational modification Phosphothreonine. The residue at position 783 (Ser783) is a Phosphoserine. The residue at position 794 (Thr794) is a Phosphothreonine. Disordered regions lie at residues 801-860 (KEAE…VQQD), 913-1035 (CLLG…DLLG), and 1047-1150 (AVAP…PNYA). Ser811, Ser826, Ser829, Ser834, and Ser939 each carry phosphoserine. Low complexity-rich tracts occupy residues 925 to 939 (PPEDLLSEDPLLLAS) and 950 to 966 (PRGGPPAAADPFGPLLP). Composition is skewed to polar residues over residues 967–976 (SSGNNSQPCS) and 1070–1080 (SQASWTKSQNP). Residue Ser1096 is modified to Phosphoserine. A compositionally biased stretch (polar residues) spans 1109-1124 (TATTPKGSSSWQTSRP). Arg1123 is subject to Omega-N-methylarginine. A phosphoserine mark is found at Ser1176 and Ser1185. The region spanning 1247–1311 (SRWTPVGMAD…FENQGSRPLF (65 aa)) is the J domain.

The protein belongs to the protein kinase superfamily. Ser/Thr protein kinase family. In terms of tissue distribution, ubiquitous. Highest in testis.

It is found in the cytoplasm. It localises to the perinuclear region. Its subcellular location is the golgi apparatus. The protein localises to the trans-Golgi network. The protein resides in the cell junction. It is found in the focal adhesion. It localises to the cytoplasmic vesicle. Its subcellular location is the clathrin-coated vesicle. It catalyses the reaction L-seryl-[protein] + ATP = O-phospho-L-seryl-[protein] + ADP + H(+). The enzyme catalyses L-threonyl-[protein] + ATP = O-phospho-L-threonyl-[protein] + ADP + H(+). Associates with cyclin G and CDK5. Seems to act as an auxilin homolog that is involved in the uncoating of clathrin-coated vesicles by Hsc70 in non-neuronal cells. Expression oscillates slightly during the cell cycle, peaking at G1. May play a role in clathrin-mediated endocytosis and intracellular trafficking, and in the dynamics of clathrin assembly/disassembly. This is Cyclin-G-associated kinase from Homo sapiens (Human).